Consider the following 201-residue polypeptide: Retinol-binding protein 4 (201 aa).

The first 18 residues, 1 to 18, serve as a signal peptide directing secretion; that stretch reads MEWVWALVLLAALGGGSA. Intrachain disulfides connect Cys22–Cys178, Cys88–Cys192, and Cys138–Cys147. Gln116 lines the substrate pocket. Omega-N-methylarginine is present on Arg139.

Belongs to the calycin superfamily. Lipocalin family. Interacts with TTR. Interaction with TTR prevents its loss by filtration through the kidney glomeruli. Interacts with STRA6. Detected in blood plasma (at protein level).

Its subcellular location is the secreted. Functionally, retinol-binding protein that mediates retinol transport in blood plasma. Delivers retinol from the liver stores to the peripheral tissues. Transfers the bound all-trans retinol to STRA6, that then facilitates retinol transport across the cell membrane. In Rattus norvegicus (Rat), this protein is Retinol-binding protein 4 (Rbp4).